The sequence spans 358 residues: HLA class I histocompatibility antigen, alpha chain E (358 aa).

The N-terminal stretch at Met1 to Ala21 is a signal peptide. Positions Gly22–Ala111 are alpha-1. The Extracellular portion of the chain corresponds to Gly22–Ile305. 5 residues coordinate a peptide antigen: Tyr28, Glu84, Ser87, Asn98, and Tyr105. Asn107 carries N-linked (GlcNAc...) asparagine glycosylation. The interval Gly112–Leu203 is alpha-2. Cys122 and Cys185 are joined by a disulfide. Residues Ser164, Lys167, Gln177, Tyr180, and Tyr192 each coordinate a peptide antigen. Residues Glu204 to Trp295 are alpha-3. The Ig-like C1-type domain occupies Pro206–Arg294. Cys224 and Cys280 form a disulfide bridge. Residues Lys296 to Ile305 are connecting peptide. The chain crosses the membrane as a helical span at residues Val306–Trp329. Residues Arg330–Leu358 are Cytoplasmic-facing. The tract at residues Ser333–Leu358 is disordered. The span at Asp348–Leu358 shows a compositional bias: polar residues. Phosphoserine is present on Ser353.

Belongs to the MHC class I family. As to quaternary structure, forms a heterotrimer with B2M and a self- or a pathogen-derived peptide (peptide-bound HLA-E-B2M). Similarly to MHC class Ia assembly, HLA-E-B2M heterodimer interacts with components of the antigen processing machinery TAPBP and TAP1-TAP2 complex; this interaction is required for peptide loading and translocation to the cell surface. Interacts with CALCR; this interaction is required for appropriate folding. The optimum binding peptide is a nonamer (VL9) that is primarily derived from amino-acid residues 3-11 of the signal sequences of most HLA-A, -B, -C and -G molecules. The VL9 peptide anchors to five main sites in the peptide-binding groove of HLA-E. Peptide-bound HLA-E-B2M complex interacts with KLRD1-KLRC1 receptor on NK cells. Binds with lower affinity to activating KLRD1-KLRC2. The common subunit KLRC1 plays a prominent role in directly interacting with HLA-E. Peptide-bound HLA-E-B2M interacts with the alpha-beta TCR on unconventional CD8+ T cells. Peptide-free HLA-E interacts with HLA-F-B2M complex; this interaction may regulate the intracellular trafficking and the stability of peptide-free MHC class I open conformers (OCs). N-glycosylated. In terms of processing, the soluble form (sHLA-E) can be partly produced by proteolytic cleavage at the cell surface (shedding) by a matrix metalloproteinase. Alternative splicing is also suggested as a mechanism for generation of sHLA-E, although it remains to be proved. As to expression, expressed in secretory endometrial cells during pregnancy (at protein level). The expression in nonlymphoid tissues is restricted to endothelial cells from all types of vessels, including arteries, veins, capillaries, and lymphatics (at protein level). In lymphoid organs, it is mainly expressed in endothelial venules, B and T cells, monocytes, macrophages, NK cells and megakaryocytes (at protein level).

It is found in the cell membrane. It localises to the golgi apparatus membrane. The protein localises to the secreted. Its function is as follows. Non-classical major histocompatibility class Ib molecule involved in immune self-nonself discrimination. In complex with B2M/beta-2-microglobulin binds nonamer self-peptides derived from the signal sequence of classical MHC class Ia molecules (VL9 peptides - VMAPRT[V/L][L/V/I/F]L). Peptide-bound HLA-E-B2M heterotrimeric complex primarily functions as a ligand for natural killer (NK) cell inhibitory receptor KLRD1-KLRC1, enabling NK cells to monitor the expression of other MHC class I molecules in healthy cells and to tolerate self. Upon cellular stress, preferentially binds signal sequence-derived peptides from stress-induced chaperones and is no longer recognized by NK cell inhibitory receptor KLRD1-KLRC1, resulting in impaired protection from NK cells. Binds signal sequence-derived peptides from non-classical MHC class Ib HLA-G molecules and acts as a ligand for NK cell activating receptor KLRD1-KLRC2, likely playing a role in the generation and effector functions of adaptive NK cells and in maternal-fetal tolerance during pregnancy. Besides self-peptides, can also bind and present pathogen-derived peptides conformationally similar to VL9 peptides to alpha-beta T cell receptor (TCR) on unconventional CD8-positive cytotoxic T cells, ultimately triggering antimicrobial immune response. Presents HIV gag peptides (immunodominant KAFSPEVIPMF and subdominant KALGPAATL epitopes) predominantly to CD8-positive T cell clones expressing a TRAV17-containing TCR, triggering HLA-E-restricted T cell responses. Presents mycobacterial peptides to HLA-E-restricted CD8-positive T cells eliciting both cytotoxic and immunoregulatory functions. In terms of biological role, (Microbial infection) Viruses like human cytomegalovirus have evolved an escape mechanism whereby virus-induced down-regulation of host MHC class I molecules is coupled to the binding of viral peptides to HLA-E, restoring HLA-E expression and inducing HLA-E-dependent NK cell immune tolerance to infected cells. (Microbial infection) May bind HIV-1 gag/Capsid protein p24-derived peptide (AISPRTLNA) on infected cells and may inhibit NK cell cytotoxicity, a mechanism that allows HIV-1 to escape immune recognition. Functionally, (Microbial infection) Upon SARS-CoV-2 infection, may contribute to functional exhaustion of cytotoxic NK cells and CD8-positive T cells. Binds SARS-CoV-2 S/Spike protein S1-derived peptide (LQPRTFLL) expressed on the surface of lung epithelial cells, inducing NK cell exhaustion and dampening of antiviral immune surveillance. This Homo sapiens (Human) protein is HLA class I histocompatibility antigen, alpha chain E.